Reading from the N-terminus, the 586-residue chain is Arginine--tRNA ligase (586 aa).

A 'HIGH' region motif is present at residues 131-141 (ANPTGPMHVGH).

Belongs to the class-I aminoacyl-tRNA synthetase family. As to quaternary structure, monomer.

It localises to the cytoplasm. The enzyme catalyses tRNA(Arg) + L-arginine + ATP = L-arginyl-tRNA(Arg) + AMP + diphosphate. The protein is Arginine--tRNA ligase of Xanthobacter autotrophicus (strain ATCC BAA-1158 / Py2).